Reading from the N-terminus, the 210-residue chain is MLLDAIEARIIGCLLEKEVTTPDQYPLSLNALTLACNQKSSRAPVMDLSETQVQAGIDELTKKRLVSEQSGFGSRVVKYKHRFCNTEFSDLQLSSAQVAVLSLLLLRGPQTPGELRTRAGRQHDFKDIAEVEATLTALASRETPLVVQLPREPGKRESRFSLTIVEATTGMTTHSVASQVDERDDSRIAALEERVAQLEARLDALLLQTH.

It belongs to the UPF0502 family.

This chain is UPF0502 protein Sama_1967, found in Shewanella amazonensis (strain ATCC BAA-1098 / SB2B).